A 93-amino-acid chain; its full sequence is Phosphoribosyl-ATP pyrophosphatase (93 aa).

Belongs to the PRA-PH family.

The protein localises to the cytoplasm. It catalyses the reaction 1-(5-phospho-beta-D-ribosyl)-ATP + H2O = 1-(5-phospho-beta-D-ribosyl)-5'-AMP + diphosphate + H(+). The protein operates within amino-acid biosynthesis; L-histidine biosynthesis; L-histidine from 5-phospho-alpha-D-ribose 1-diphosphate: step 2/9. The sequence is that of Phosphoribosyl-ATP pyrophosphatase from Metallosphaera sedula (strain ATCC 51363 / DSM 5348 / JCM 9185 / NBRC 15509 / TH2).